The following is a 153-amino-acid chain: Large ribosomal subunit protein uL15 (153 aa).

Positions 1 to 42 are disordered; sequence MKLNTIKPGIGSAKPKRRVGRGIGSGLGKTCGRGHKGQKSRA. Positions 21–31 are enriched in gly residues; the sequence is RGIGSGLGKTC.

The protein belongs to the universal ribosomal protein uL15 family. As to quaternary structure, part of the 50S ribosomal subunit.

In terms of biological role, binds to the 23S rRNA. The chain is Large ribosomal subunit protein uL15 from Nitrosomonas europaea (strain ATCC 19718 / CIP 103999 / KCTC 2705 / NBRC 14298).